The following is a 326-amino-acid chain: Acetyl-coenzyme A carboxylase carboxyl transferase subunit alpha (326 aa).

The region spanning L45–E298 is the CoA carboxyltransferase C-terminal domain.

The protein belongs to the AccA family. In terms of assembly, acetyl-CoA carboxylase is a heterohexamer composed of biotin carboxyl carrier protein (AccB), biotin carboxylase (AccC) and two subunits each of ACCase subunit alpha (AccA) and ACCase subunit beta (AccD).

The protein localises to the cytoplasm. It catalyses the reaction N(6)-carboxybiotinyl-L-lysyl-[protein] + acetyl-CoA = N(6)-biotinyl-L-lysyl-[protein] + malonyl-CoA. It functions in the pathway lipid metabolism; malonyl-CoA biosynthesis; malonyl-CoA from acetyl-CoA: step 1/1. Component of the acetyl coenzyme A carboxylase (ACC) complex. First, biotin carboxylase catalyzes the carboxylation of biotin on its carrier protein (BCCP) and then the CO(2) group is transferred by the carboxyltransferase to acetyl-CoA to form malonyl-CoA. The polypeptide is Acetyl-coenzyme A carboxylase carboxyl transferase subunit alpha (Nostoc punctiforme (strain ATCC 29133 / PCC 73102)).